Here is a 977-residue protein sequence, read N- to C-terminus: Synaptonemal complex protein 2-like (977 aa).

Disordered stretches follow at residues 447–474 (LGSQTSEHSSTTKTSSANRSVQKSLSNA), 574–593 (QSTERATPASRYRASMNSPL), 642–728 (RNKS…QDIM), and 804–824 (TEKNVNRSAADSEDSEDVFYS). A compositionally biased stretch (low complexity) spans 449-462 (SQTSEHSSTTKTSS). Polar residues predominate over residues 463 to 474 (ANRSVQKSLSNA). A compositionally biased stretch (basic and acidic residues) spans 674-693 (SRKEMHRPEDINPKSPHSAE).

Belongs to the SYCP2 family. Post-translationally, ubiquitinated and gradually degraded by the proteasome during oocyte maturation. In terms of processing, phosphorylated in maturing oocytes, before its degradation. As to expression, expressed in immature oocytes (at protein level). Expressed in the ovary.

Its subcellular location is the nucleus. The protein resides in the chromosome. The protein localises to the centromere. It is found in the nucleolus. In terms of biological role, oocyte-specific protein that localizes to centromeres at the dictyate stage and regulates the survival of primordial oocytes. The sequence is that of Synaptonemal complex protein 2-like (sycp2l) from Xenopus laevis (African clawed frog).